Consider the following 155-residue polypeptide: Endoribonuclease YbeY (155 aa).

Residues His-117, His-121, and His-127 each contribute to the Zn(2+) site.

It belongs to the endoribonuclease YbeY family. Zn(2+) serves as cofactor.

It is found in the cytoplasm. Its function is as follows. Single strand-specific metallo-endoribonuclease involved in late-stage 70S ribosome quality control and in maturation of the 3' terminus of the 16S rRNA. The polypeptide is Endoribonuclease YbeY (Treponema denticola (strain ATCC 35405 / DSM 14222 / CIP 103919 / JCM 8153 / KCTC 15104)).